A 390-amino-acid chain; its full sequence is 2-oxoisovalerate dehydrogenase subunit beta, mitochondrial (390 aa).

The transit peptide at 1–48 directs the protein to the mitochondrion; the sequence is MAAVAARAGGLLWLRAAGAERRRCGLRCAALVQGFLQPGGEDTAQKRR. Position 150 (Tyr150) interacts with thiamine diphosphate. Gly176, Leu178, Thr179, Cys226, and Asp229 together coordinate K(+). At Lys230 the chain carries N6-acetyllysine. Asn231 lines the K(+) pocket. An N6-acetyllysine modification is found at Lys239.

In terms of assembly, heterotetramer of 2 alpha/BCKDHA and 2 beta chains/BCKDHB that forms the branched-chain alpha-keto acid decarboxylase (E1) component of the BCKD complex. The branched-chain alpha-ketoacid dehydrogenase is a large complex composed of three major building blocks E1, E2 and E3. It is organized around E2, a 24-meric cubic core composed of DBT, to which are associated 6 to 12 copies of E1, and approximately 6 copies of the dehydrogenase E3, a DLD dimer. Requires thiamine diphosphate as cofactor.

It localises to the mitochondrion matrix. The catalysed reaction is N(6)-[(R)-lipoyl]-L-lysyl-[protein] + 3-methyl-2-oxobutanoate + H(+) = N(6)-[(R)-S(8)-2-methylpropanoyldihydrolipoyl]-L-lysyl-[protein] + CO2. In terms of biological role, together with BCKDHA forms the heterotetrameric E1 subunit of the mitochondrial branched-chain alpha-ketoacid dehydrogenase (BCKD) complex. The BCKD complex catalyzes the multi-step oxidative decarboxylation of alpha-ketoacids derived from the branched-chain amino-acids valine, leucine and isoleucine producing CO2 and acyl-CoA which is subsequently utilized to produce energy. The E1 subunit catalyzes the first step with the decarboxylation of the alpha-ketoacid forming an enzyme-product intermediate. A reductive acylation mediated by the lipoylamide cofactor of E2 extracts the acyl group from the E1 active site for the next step of the reaction. The sequence is that of 2-oxoisovalerate dehydrogenase subunit beta, mitochondrial from Mus musculus (Mouse).